A 163-amino-acid polypeptide reads, in one-letter code: Crossover junction endodeoxyribonuclease RuvC (163 aa).

Active-site residues include Asp4, Glu65, and Asp138. Asp4, Glu65, and Asp138 together coordinate Mg(2+).

It belongs to the RuvC family. Homodimer which binds Holliday junction (HJ) DNA. The HJ becomes 2-fold symmetrical on binding to RuvC with unstacked arms; it has a different conformation from HJ DNA in complex with RuvA. In the full resolvosome a probable DNA-RuvA(4)-RuvB(12)-RuvC(2) complex forms which resolves the HJ. Mg(2+) is required as a cofactor.

It is found in the cytoplasm. The enzyme catalyses Endonucleolytic cleavage at a junction such as a reciprocal single-stranded crossover between two homologous DNA duplexes (Holliday junction).. Its function is as follows. The RuvA-RuvB-RuvC complex processes Holliday junction (HJ) DNA during genetic recombination and DNA repair. Endonuclease that resolves HJ intermediates. Cleaves cruciform DNA by making single-stranded nicks across the HJ at symmetrical positions within the homologous arms, yielding a 5'-phosphate and a 3'-hydroxyl group; requires a central core of homology in the junction. The consensus cleavage sequence is 5'-(A/T)TT(C/G)-3'. Cleavage occurs on the 3'-side of the TT dinucleotide at the point of strand exchange. HJ branch migration catalyzed by RuvA-RuvB allows RuvC to scan DNA until it finds its consensus sequence, where it cleaves and resolves the cruciform DNA. The chain is Crossover junction endodeoxyribonuclease RuvC from Corynebacterium diphtheriae (strain ATCC 700971 / NCTC 13129 / Biotype gravis).